Consider the following 642-residue polypeptide: Zinc finger protein 398 (642 aa).

Disordered regions lie at residues M1–P24 and E198–S225. The 72-residue stretch at V143–I214 folds into the KRAB domain. Residues A207 to E220 are compositionally biased toward acidic residues. A Glycyl lysine isopeptide (Lys-Gly) (interchain with G-Cter in SUMO2) cross-link involves residue K265. Residues F343–H364 form a C2H2-type 1; atypical zinc finger. The segment at L370 to H392 adopts a C2H2-type 2; degenerate zinc-finger fold. 7 C2H2-type zinc fingers span residues P398–H420, F427–H449, F455–H477, F483–H505, Y511–H533, F539–H561, and Y567–H590. The segment at R587–L615 is disordered.

The protein belongs to the krueppel C2H2-type zinc-finger protein family.

The protein localises to the nucleus. Its function is as follows. Functions as a transcriptional activator. The chain is Zinc finger protein 398 (ZNF398) from Homo sapiens (Human).